A 207-amino-acid polypeptide reads, in one-letter code: MGNMMSKVNNLLYTKLRGLFSGQSERSITMIGLDGAGKTTLLLYLQTGEVHQTVPTLGFNCENVTLGSMKFQVWDIGGQNSFMRFWHQYINEGCGIIYMVDCADPQRFGKSGEELWRILNILNSPRPLLVLANKIDLIREHERSEVVKSIRNEFNLERYNGPSQVVPISVLQAGSMTSANDENGREIIDAFRWLNKELEKMPRAEAL.

A lipid anchor (N-myristoyl glycine) is attached at Gly-2. GTP is bound by residues 32–39, 75–79, and 133–136; these read GLDGAGKT, DIGGQ, and NKID.

This sequence belongs to the small GTPase superfamily. Arf family.

It is found in the golgi apparatus. In terms of biological role, GTP-binding protein involved in protein trafficking; may modulate vesicle budding and uncoating within the Golgi apparatus. The chain is ADP-ribosylation factor (ARF-1) from Encephalitozoon cuniculi (strain GB-M1) (Microsporidian parasite).